Consider the following 281-residue polypeptide: Probable feruloyl esterase A (281 aa).

The signal sequence occupies residues 1 to 21; that stretch reads MKNFFSMHAILLACSAGAGLA. 3 disulfide bridges follow: Cys50–Cys279, Cys112–Cys115, and Cys248–Cys255. Substrate is bound at residue Asp98. An N-linked (GlcNAc...) asparagine glycan is attached at Asn100. Tyr101 is a substrate binding site. Catalysis depends on Ser154, which acts as the Nucleophile. Residue Asn173 is glycosylated (N-linked (GlcNAc...) asparagine). The active-site Charge relay system is the Asp215. Substrate is bound at residue His268. Catalysis depends on His268, which acts as the Charge relay system.

It belongs to the AB hydrolase superfamily. FaeA family.

Its subcellular location is the secreted. The enzyme catalyses feruloyl-polysaccharide + H2O = ferulate + polysaccharide.. Its function is as follows. Involved in degradation of plant cell walls. Hydrolyzes the feruloyl-arabinose ester bond in arabinoxylans, and the feruloyl-galactose ester bond in pectin. The protein is Probable feruloyl esterase A (faeA) of Aspergillus oryzae (strain ATCC 42149 / RIB 40) (Yellow koji mold).